Here is a 446-residue protein sequence, read N- to C-terminus: Glutamine synthetase (446 aa).

In terms of domain architecture, GS beta-grasp spans Glu18–Gly103. The GS catalytic domain maps to Pro110–Tyr446. Mg(2+) is bound by residues Glu134 and Glu136. An ATP-binding site is contributed by Glu186. Mg(2+) is bound by residues Glu191 and Glu198. Residues Asn242–Gly243 and Gly243 each bind L-glutamate. Residue His247 participates in Mg(2+) binding. Position 251 (Ser251) interacts with ATP. The L-glutamate site is built by Arg300, Glu306, and Arg318. Positions 318 and 323 each coordinate ATP. Residue Glu335 participates in Mg(2+) binding. Position 337 (Arg337) interacts with L-glutamate.

This sequence belongs to the glutamine synthetase family. As to quaternary structure, oligomer of 12 subunits arranged in the form of two hexagons. In its feedback-inhibited form, interacts with TnrA in order to block its DNA-binding activity. It depends on Mg(2+) as a cofactor.

It localises to the cytoplasm. The catalysed reaction is L-glutamate + NH4(+) + ATP = L-glutamine + ADP + phosphate + H(+). With respect to regulation, inhibited by glutamine. Glutamine synthetase (GS) is an unusual multitasking protein that functions as an enzyme, a transcription coregulator, and a chaperone in ammonium assimilation and in the regulation of genes involved in nitrogen metabolism. It catalyzes the ATP-dependent biosynthesis of glutamine from glutamate and ammonia. Feedback-inhibited GlnA also interacts with and regulates the activity of the transcriptional regulator TnrA. During nitrogen limitation, TnrA is in its DNA-binding active state and turns on the transcription of genes required for nitrogen assimilation. Under conditions of nitrogen excess, feedback-inhibited GlnA forms a stable complex with TnrA, which inhibits its DNA-binding activity. In contrast, feedback-inhibited GlnA acts as a chaperone to stabilize the DNA-binding activity of GlnR, which represses the transcription of nitrogen assimilation genes. The protein is Glutamine synthetase of Staphylococcus epidermidis (strain ATCC 35984 / DSM 28319 / BCRC 17069 / CCUG 31568 / BM 3577 / RP62A).